Here is a 1040-residue protein sequence, read N- to C-terminus: Multidrug resistance protein MdtB (1040 aa).

The next 12 helical transmembrane spans lie at 16 to 36 (FIMRPVATTLLMVAILLAGII), 347 to 367 (LMMAIALVVMIIYLFLRNIPA), 369 to 389 (IIPGVAVPLSLIGTFAVMVFL), 396 to 416 (LTLMALTIATGFVVDDAIVVI), 440 to 460 (IGFTIISLTFSLIAVLIPLLF), 472 to 492 (FAITLAVAILISAVVSLTLTP), 537 to 557 (WLTLSVALSTLLLSVLLWVFI), 863 to 883 (LGSTVWLIVAAVVAMYIVLGI), 888 to 908 (FIHPITILSTLPTAGVGALLA), 911 to 931 (IAGSELDVIAIIGIILLIGIV), 968 to 988 (ILMTTLAALLGALPLMLSTGV), and 998 to 1018 (IGMVGGLIVSQVLTLFTTPVI).

It belongs to the resistance-nodulation-cell division (RND) (TC 2.A.6) family. MdtB subfamily. As to quaternary structure, part of a tripartite efflux system composed of MdtA, MdtB and MdtC. MdtB forms a heteromultimer with MdtC.

Its subcellular location is the cell inner membrane. The MdtABC tripartite complex confers resistance against novobiocin and deoxycholate. The sequence is that of Multidrug resistance protein MdtB from Escherichia coli O139:H28 (strain E24377A / ETEC).